A 335-amino-acid polypeptide reads, in one-letter code: Anthranilate phosphoribosyltransferase (335 aa).

5-phospho-alpha-D-ribose 1-diphosphate-binding positions include Gly-79, 82–83 (GD), Thr-87, 89–92 (NIST), 107–115 (KHCNQGVSS), and Ser-119. Position 79 (Gly-79) interacts with anthranilate. Ser-91 serves as a coordination point for Mg(2+). Asn-110 contributes to the anthranilate binding site. Arg-165 contacts anthranilate. 2 residues coordinate Mg(2+): Asp-223 and Glu-224.

The protein belongs to the anthranilate phosphoribosyltransferase family. As to quaternary structure, homodimer. The cofactor is Mg(2+).

It carries out the reaction N-(5-phospho-beta-D-ribosyl)anthranilate + diphosphate = 5-phospho-alpha-D-ribose 1-diphosphate + anthranilate. It participates in amino-acid biosynthesis; L-tryptophan biosynthesis; L-tryptophan from chorismate: step 2/5. Functionally, catalyzes the transfer of the phosphoribosyl group of 5-phosphorylribose-1-pyrophosphate (PRPP) to anthranilate to yield N-(5'-phosphoribosyl)-anthranilate (PRA). The chain is Anthranilate phosphoribosyltransferase from Buchnera aphidicola subsp. Diuraphis noxia.